The following is a 119-amino-acid chain: Small ribosomal subunit protein bS16 (119 aa).

The protein belongs to the bacterial ribosomal protein bS16 family.

The protein is Small ribosomal subunit protein bS16 of Chlamydia abortus (strain DSM 27085 / S26/3) (Chlamydophila abortus).